The chain runs to 208 residues: Elongation factor Ts, chloroplastic (208 aa).

The protein belongs to the EF-Ts family.

The protein localises to the plastid. The protein resides in the chloroplast. Associates with the EF-Tu.GDP complex and induces the exchange of GDP to GTP. It remains bound to the aminoacyl-tRNA.EF-Tu.GTP complex up to the GTP hydrolysis stage on the ribosome. This is Elongation factor Ts, chloroplastic (tsf) from Cyanidium caldarium (Red alga).